A 548-amino-acid polypeptide reads, in one-letter code: Membrane protein insertase YidC (548 aa).

The chain crosses the membrane as a helical span at residues 6-26; sequence NLLIIALLFVSFMIWQAWEQD. The tract at residues 28-52 is disordered; the sequence is NPQPQQQTTQTTTTAAGSAADQGVP. A compositionally biased stretch (low complexity) spans 29-41; that stretch reads PQPQQQTTQTTTT. 4 helical membrane-spanning segments follow: residues 345-365, 420-440, 458-478, and 499-519; these read KFIHSFLGNWGFSIIVITFIV, LGGCFPLIIQMPIFLALYYML, LSAQDPYYILPIIMGATMFFI, and PVIFTVFFLWFPSGLVVYYIV.

It belongs to the OXA1/ALB3/YidC family. Type 1 subfamily. In terms of assembly, interacts with the Sec translocase complex via SecD. Specifically interacts with transmembrane segments of nascent integral membrane proteins during membrane integration.

It localises to the cell inner membrane. Required for the insertion and/or proper folding and/or complex formation of integral membrane proteins into the membrane. Involved in integration of membrane proteins that insert both dependently and independently of the Sec translocase complex, as well as at least some lipoproteins. Aids folding of multispanning membrane proteins. The protein is Membrane protein insertase YidC of Klebsiella pneumoniae subsp. pneumoniae (strain ATCC 700721 / MGH 78578).